The sequence spans 241 residues: MSPMRWAIFLVLLTITFSGCLNKEISKEEIIKKIDEINTFSYNAKVFINLSVSNPAINKVNMKMDIDGYSDGKLSKGIIHVYYTVRYFNGRNETIPFYVNEEGTFIKLEGKWQKITNNDLSNHTWNILAYIKDLIEKNDIKIEEENNHYIIRLKDENAEKQLNPFFYRGIKIPGINLKISEEEVVIILDKYGTPIKVIKKGKLYGTSSKGNLDGVIVIETEIKDINKDFDFSIPEDLSIYN.

This is an uncharacterized protein from Methanocaldococcus jannaschii (strain ATCC 43067 / DSM 2661 / JAL-1 / JCM 10045 / NBRC 100440) (Methanococcus jannaschii).